Consider the following 328-residue polypeptide: Ornithine carbamoyltransferase, catabolic (328 aa).

Carbamoyl phosphate contacts are provided by residues 56 to 59 (STRT), Q83, R107, and 134 to 137 (HPTQ). L-ornithine-binding positions include N166, D230, and 234-235 (SM). Residues 270–271 (CL) and R315 contribute to the carbamoyl phosphate site.

The protein belongs to the aspartate/ornithine carbamoyltransferase superfamily. OTCase family.

It is found in the cytoplasm. It carries out the reaction carbamoyl phosphate + L-ornithine = L-citrulline + phosphate + H(+). It functions in the pathway amino-acid degradation; L-arginine degradation via ADI pathway; carbamoyl phosphate from L-arginine: step 2/2. Reversibly catalyzes the transfer of the carbamoyl group from carbamoyl phosphate (CP) to the N(epsilon) atom of ornithine (ORN) to produce L-citrulline. This is Ornithine carbamoyltransferase, catabolic (arcB) from Borreliella afzelii (Borrelia afzelii).